Reading from the N-terminus, the 240-residue chain is Protein OPG176 (240 aa).

This sequence belongs to the orthopoxvirus OPG176 family. As to quaternary structure, tetramer. Interacts with host MYD88, TRF4, TICAM2 and MAL.

Functionally, BCL2-like protein which disrupts the host immune response by inhibiting the TLR4 signaling pathway leading to NF-kappa-B activation. Acts close to the plasma membrane and targets several host TIR-domain containing adapter proteins including MYD88, TIRAP, TRIF and TICAM2. In turn, blocks the host NF-kappa-B and TRIF-mediated IRF3 activation. The polypeptide is Protein OPG176 (OPG176) (Cynomys gunnisoni (Gunnison's prairie dog)).